The chain runs to 346 residues: Putative isoaspartyl peptidase/L-asparaginase (346 aa).

The Nucleophile role is filled by T207. Substrate contacts are provided by residues 235–238 (RVGD) and 257–260 (TGTG).

It belongs to the Ntn-hydrolases family. As to quaternary structure, heterodimer of an alpha and beta chain produced by autocleavage. Post-translationally, cleaved into an alpha and beta chain by autocatalysis; this activates the enzyme. The N-terminal residue of the beta subunit is responsible for the nucleophile hydrolase activity.

It carries out the reaction Cleavage of a beta-linked Asp residue from the N-terminus of a polypeptide.. It catalyses the reaction L-asparagine + H2O = L-aspartate + NH4(+). Has both L-asparaginase and beta-aspartyl peptidase activity. Does not have aspartylglucosaminidase activity and is inactive toward GlcNAc-L-Asn. Likewise, has no activity toward glutamine. This is Putative isoaspartyl peptidase/L-asparaginase from Dictyostelium discoideum (Social amoeba).